The chain runs to 217 residues: Adenosylcobinamide-GDP ribazoletransferase (217 aa).

Transmembrane regions (helical) follow at residues 6–26 (ALLSFFTIIPAGVAKLDFKCA), 39–61 (GPAAAALWLGASPHVAYLLLLLM), 95–115 (GTGGIFAVVATYAVATASTAS), 116–136 (PLQLLLAEVFSKALIVTVAAF), and 162–182 (ALAVIICLRPAATLAALAVAL).

The protein belongs to the CobS family. Mg(2+) serves as cofactor.

It localises to the cell membrane. The catalysed reaction is alpha-ribazole + adenosylcob(III)inamide-GDP = adenosylcob(III)alamin + GMP + H(+). The enzyme catalyses alpha-ribazole 5'-phosphate + adenosylcob(III)inamide-GDP = adenosylcob(III)alamin 5'-phosphate + GMP + H(+). The protein operates within cofactor biosynthesis; adenosylcobalamin biosynthesis; adenosylcobalamin from cob(II)yrinate a,c-diamide: step 7/7. Functionally, joins adenosylcobinamide-GDP and alpha-ribazole to generate adenosylcobalamin (Ado-cobalamin). Also synthesizes adenosylcobalamin 5'-phosphate from adenosylcobinamide-GDP and alpha-ribazole 5'-phosphate. The protein is Adenosylcobinamide-GDP ribazoletransferase of Pyrobaculum calidifontis (strain DSM 21063 / JCM 11548 / VA1).